Reading from the N-terminus, the 116-residue chain is Mitochondrial import inner membrane translocase subunit PAM16 like 2 (116 aa).

The transit peptide at 1–27 directs the protein to the mitochondrion; that stretch reads MAGRLLANLIVMGSGIIGRAVFQAYRQ. The segment at 57–106 is J-like; that stretch reads EARQILGVTEKTSWEEILQKYDKLFENNAKAGSFYLQSKVHRAKECLEVV.

This sequence belongs to the TIM16/PAM16 family. In terms of tissue distribution, expressed constitutively and ubiquitously, except in root tips, at low levels.

Its subcellular location is the mitochondrion inner membrane. It is found in the cytoplasm. Functionally, regulates ATP-dependent protein translocation into the mitochondrial matrix. Involved in the uptake of thaxtomin, a phytotoxin produced by Streptomyces bacteria, that causes dramatic cell swelling, reduced seedling growth, and inhibition of cellulose synthesis. Modulates polar auxin transport. Involved in importing a negative regulator of plant immunity into mitochondria, thus protecting plants from over-accumulation of reactive oxygen species (ROS) and preventing autoimmunity. Confers sensitivity to virulent pathogens such as the oomycete H.arabidopsidis Noco2 and the bacteria P.syringae pv. maculicola ES4326. The chain is Mitochondrial import inner membrane translocase subunit PAM16 like 2 from Arabidopsis thaliana (Mouse-ear cress).